The sequence spans 154 residues: Transmembrane protein 35B (154 aa).

The signal sequence occupies residues 1–22 (MALLLSVLRVLLGGFFALVGLA). The next 3 membrane-spanning stretches (helical) occupy residues 63-83 (IAVG…PPML), 85-105 (EISN…LAAL), and 112-132 (CIPA…QLLA).

Belongs to the DoxX family.

The protein resides in the membrane. This chain is Transmembrane protein 35B, found in Homo sapiens (Human).